The primary structure comprises 236 residues: Ribonuclease 3 (236 aa).

The region spanning 6–140 is the RNase III domain; it reads FLDFLKQNRI…FIGAVAQDQG (135 aa). Glu-46 is a Mg(2+) binding site. Asp-50 is a catalytic residue. Positions 126 and 129 each coordinate Mg(2+). Glu-129 is an active-site residue. The DRBM domain maps to 166-231; the sequence is DYKTIFQEQA…AKNAILKLDD (66 aa).

It belongs to the ribonuclease III family. In terms of assembly, homodimer. Mg(2+) is required as a cofactor.

It is found in the cytoplasm. It carries out the reaction Endonucleolytic cleavage to 5'-phosphomonoester.. Digests double-stranded RNA. Involved in the processing of primary rRNA transcript to yield the immediate precursors to the large and small rRNAs (23S and 16S). Processes some mRNAs, and tRNAs when they are encoded in the rRNA operon. Processes pre-crRNA and tracrRNA of type II CRISPR loci if present in the organism. This is Ribonuclease 3 from Ureaplasma parvum serovar 3 (strain ATCC 700970).